The primary structure comprises 162 residues: NADH-quinone oxidoreductase subunit I (162 aa).

4Fe-4S ferredoxin-type domains follow at residues 52–82 (LRRY…IEAG) and 93–122 (VRYD…EGPN). Positions 62, 65, 68, 72, 102, 105, 108, and 112 each coordinate [4Fe-4S] cluster.

Belongs to the complex I 23 kDa subunit family. As to quaternary structure, NDH-1 is composed of 14 different subunits. Subunits NuoA, H, J, K, L, M, N constitute the membrane sector of the complex. Requires [4Fe-4S] cluster as cofactor.

The protein localises to the cell inner membrane. It catalyses the reaction a quinone + NADH + 5 H(+)(in) = a quinol + NAD(+) + 4 H(+)(out). Functionally, NDH-1 shuttles electrons from NADH, via FMN and iron-sulfur (Fe-S) centers, to quinones in the respiratory chain. The immediate electron acceptor for the enzyme in this species is believed to be ubiquinone. Couples the redox reaction to proton translocation (for every two electrons transferred, four hydrogen ions are translocated across the cytoplasmic membrane), and thus conserves the redox energy in a proton gradient. In Bradyrhizobium sp. (strain ORS 278), this protein is NADH-quinone oxidoreductase subunit I.